The primary structure comprises 267 residues: UPF0246 protein Dshi_3333 (267 aa).

The protein belongs to the UPF0246 family.

This Dinoroseobacter shibae (strain DSM 16493 / NCIMB 14021 / DFL 12) protein is UPF0246 protein Dshi_3333.